The sequence spans 105 residues: uncharacterized protein (105 aa).

Residues 1–48 (MAPKAFFVCLPWVLPRHALIVRQAGNPYHFLAYTNPRAPGKLQDSHCP) are Extracellular-facing. A helical membrane pass occupies residues 49-69 (VFFMGIIIITIITVTLAIIII). A topological domain (cytoplasmic) is located at residue Asn-70. Residues 71–91 (IIFLTLFDDGMCFYCSLLTFS) traverse the membrane as a helical segment. The Extracellular portion of the chain corresponds to 92 to 105 (FVSFNFDHFDHFDL).

It is found in the membrane. This is an uncharacterized protein from Saccharomyces cerevisiae (strain ATCC 204508 / S288c) (Baker's yeast).